A 382-amino-acid chain; its full sequence is MKYELKTTSGNARRGRLTFSRPKGEYVVETPAFMPVGTYGTVKGMTPEEVAATGAQILLGNTFHLWLRPGQEVMKSHGDLHGFMQWHGPILTDSGGFQVFSLGKLRKIKEEGVTFQNPISGEKIFLSPEKSMEIQYDLGSDIVMIFDECTPYPATFDYAKNSMEMSLRWAKRSRDRFDELQNPRALFGIVQGGTYEELRKISVEGLVNIGFDGYAVGGLAVGEPKEEMHRILEFTTPLLPQDKPRYLMGVGKPEDLVEGVRRGIDMFDCVMPTRNARNGHLFVSNGIVKIRNAKYKTDTTPLDPECDCYTCKNYTKAYLYHLDKCGEILGARLNTIHNLRYYQRLMAQIRQAIEEDRFDDFVVEFYAKIGKEVPPLQSEVNK.

The active-site Proton acceptor is the Asp93. Residues 93–97 (DSGGF), Asp147, Gln191, and Gly218 each bind substrate. The segment at 249–255 (GVGKPED) is RNA binding. Residue Asp268 is the Nucleophile of the active site. The interval 273-277 (TRNAR) is RNA binding; important for wobble base 34 recognition. Cys306, Cys308, Cys311, and His337 together coordinate Zn(2+).

This sequence belongs to the queuine tRNA-ribosyltransferase family. Homodimer. Within each dimer, one monomer is responsible for RNA recognition and catalysis, while the other monomer binds to the replacement base PreQ1. The cofactor is Zn(2+).

The catalysed reaction is 7-aminomethyl-7-carbaguanine + guanosine(34) in tRNA = 7-aminomethyl-7-carbaguanosine(34) in tRNA + guanine. It participates in tRNA modification; tRNA-queuosine biosynthesis. Functionally, catalyzes the base-exchange of a guanine (G) residue with the queuine precursor 7-aminomethyl-7-deazaguanine (PreQ1) at position 34 (anticodon wobble position) in tRNAs with GU(N) anticodons (tRNA-Asp, -Asn, -His and -Tyr). Catalysis occurs through a double-displacement mechanism. The nucleophile active site attacks the C1' of nucleotide 34 to detach the guanine base from the RNA, forming a covalent enzyme-RNA intermediate. The proton acceptor active site deprotonates the incoming PreQ1, allowing a nucleophilic attack on the C1' of the ribose to form the product. After dissociation, two additional enzymatic reactions on the tRNA convert PreQ1 to queuine (Q), resulting in the hypermodified nucleoside queuosine (7-(((4,5-cis-dihydroxy-2-cyclopenten-1-yl)amino)methyl)-7-deazaguanosine). This chain is Queuine tRNA-ribosyltransferase, found in Actinobacillus pleuropneumoniae serotype 5b (strain L20).